Consider the following 186-residue polypeptide: UPF0149 protein Pfl01_5435 (186 aa).

This sequence belongs to the UPF0149 family.

This chain is UPF0149 protein Pfl01_5435, found in Pseudomonas fluorescens (strain Pf0-1).